A 352-amino-acid chain; its full sequence is Fe(3+) ions import ATP-binding protein FbpC (352 aa).

Residues 5–239 (LHIGHLSKSF…PADLDAALFI (235 aa)) form the ABC transporter domain. Position 37 to 44 (37 to 44 (GASGCGKT)) interacts with ATP.

It belongs to the ABC transporter superfamily. Fe(3+) ion importer (TC 3.A.1.10) family. As to quaternary structure, the complex is composed of two ATP-binding proteins (FbpC), two transmembrane proteins (FbpB) and a solute-binding protein (FbpA).

Its subcellular location is the cell inner membrane. The enzyme catalyses Fe(3+)(out) + ATP + H2O = Fe(3+)(in) + ADP + phosphate + H(+). In terms of biological role, part of the ABC transporter complex FbpABC involved in Fe(3+) ions import. Responsible for energy coupling to the transport system. In Neisseria gonorrhoeae (strain ATCC 700825 / FA 1090), this protein is Fe(3+) ions import ATP-binding protein FbpC.